We begin with the raw amino-acid sequence, 65 residues long: Protein C13 (65 aa).

This sequence belongs to the poxviridae C13 protein family.

The chain is Protein C13 from Vaccinia virus (strain Copenhagen) (VACV).